The following is a 170-amino-acid chain: Adenine phosphoribosyltransferase (170 aa).

This sequence belongs to the purine/pyrimidine phosphoribosyltransferase family. As to quaternary structure, homodimer.

The protein localises to the cytoplasm. The catalysed reaction is AMP + diphosphate = 5-phospho-alpha-D-ribose 1-diphosphate + adenine. The protein operates within purine metabolism; AMP biosynthesis via salvage pathway; AMP from adenine: step 1/1. Catalyzes a salvage reaction resulting in the formation of AMP, that is energically less costly than de novo synthesis. The protein is Adenine phosphoribosyltransferase of Mycoplasmopsis agalactiae (strain NCTC 10123 / CIP 59.7 / PG2) (Mycoplasma agalactiae).